Here is a 932-residue protein sequence, read N- to C-terminus: MNFIKKVIGGGSSKSKTDIKIEDEQHEQQHEQQHEKQQIPDKISTSKVNSPCVPPTCTYISKENVRSDLSLIKDFNSAYYYNYYRTLEKNSTNLLTSPGLNTKVVSNQFTLKEFNIVSEMTDSCIVSVWTQKYSNLSLTPVEAVYQIPLAPYATVSDFSVILKDKVLKGKIKENEKAKEKYNDAIASGGQAFLAEKVEGFFKLQIGNLPPQEDVTVNITITSEIGTHLESLHFCLHRFIFPKSAFKFNYTLNASLSTPIETIEMDHFQPTITYKDESKTNATVTISTENGVSNNIIAIIVPKYSEKPESFIEYSPIDKSYALAINFYPKFSVGLDEVDQKSEFIFVLDCSGSMSGKPIEKSKMALEICMRSLNENSKFNIVCFGSNFNKLFETSKHYNDETLQKASEYINRIDANLGGTELLEPIVDILSKESDPEFPRQVFILTDGEISNRDKLIDYVGKEANTTRIFTYGIGSYVDKELIVGVSKACKGYYEMIVDNSDMEEKVMKLISIAMQPTLSNIKVDWGVLSNVVQSPAQIRPLFNQERMMIYATLDKEPTEKQVTVILSGNGPLSERISFPVDLDFSKANQSTSHIHTLSAFKHIQDLEESERKEKKDNKDKIVKLGKRFGLVSKHTSYIVTADSDKVTEETMKTVQVLEPTQQINTSPGSGSGFIPTTRVQGSSSVFPSSPTPLSGPSPYTVCAPPPPPPTSSPYTNCAPPPPQFSRCIAPQPYQSAPAPPAPPAPSRLSQAQSQMDYCDQELLCESLEGDLLVEEEELECKEIECSPPQKLSYITPFAPTSQISQSSRECRSKKSSSPTIQKSSSLPSRPSTSSSSLIEIIRQQKANGSFTKSSVSSFINVDTPPPSSDIPEDVWTTLLIIANFILNFDSQKSQWELVSQKATKFVKQQIIKSSIASTFETLLESAKKSISN.

Positions 1-49 (MNFIKKVIGGGSSKSKTDIKIEDEQHEQQHEQQHEKQQIPDKISTSKVN) are disordered. Positions 15–39 (SKTDIKIEDEQHEQQHEQQHEKQQI) are enriched in basic and acidic residues. Residues 95 to 222 (LTSPGLNTKV…DVTVNITITS (128 aa)) enclose the VIT domain. In terms of domain architecture, VWFA spans 342 to 521 (EFIFVLDCSG…IAMQPTLSNI (180 aa)). 2 disordered regions span residues 661–752 (QQIN…SQAQ) and 800–834 (TSQI…STSS). A compositionally biased stretch (polar residues) spans 677–686 (TRVQGSSSVF). Low complexity predominate over residues 815–834 (SSSPTIQKSSSLPSRPSTSS).

The chain is von Willebrand factor A domain-containing protein DDB_G0292028 from Dictyostelium discoideum (Social amoeba).